Consider the following 234-residue polypeptide: Phosphoribosylaminoimidazole-succinocarboxamide synthase (234 aa).

Belongs to the SAICAR synthetase family.

The enzyme catalyses 5-amino-1-(5-phospho-D-ribosyl)imidazole-4-carboxylate + L-aspartate + ATP = (2S)-2-[5-amino-1-(5-phospho-beta-D-ribosyl)imidazole-4-carboxamido]succinate + ADP + phosphate + 2 H(+). It functions in the pathway purine metabolism; IMP biosynthesis via de novo pathway; 5-amino-1-(5-phospho-D-ribosyl)imidazole-4-carboxamide from 5-amino-1-(5-phospho-D-ribosyl)imidazole-4-carboxylate: step 1/2. The chain is Phosphoribosylaminoimidazole-succinocarboxamide synthase from Streptococcus pyogenes serotype M1.